Here is a 616-residue protein sequence, read N- to C-terminus: uncharacterized protein (616 aa).

Disordered regions lie at residues 166-243 and 272-298; these read SRTY…TPEL and DHEE…IEEI. Positions 184 to 200 are enriched in basic and acidic residues; sequence RVDESRPSENSSRHDYV. A compositionally biased stretch (polar residues) spans 221–237; that stretch reads TRTSNVTQTQPPTNQVF. A compositionally biased stretch (acidic residues) spans 272-287; sequence DHEEEEGQDDDEETEI. The 75-residue stretch at 343 to 417 folds into the Ubiquitin-like domain; it reads ILIKLKFMND…VHCHISTTPY (75 aa).

This is an uncharacterized protein from Caenorhabditis elegans.